A 395-amino-acid polypeptide reads, in one-letter code: Alanine racemase 2 (395 aa).

K60 (proton acceptor; specific for D-alanine) is an active-site residue. K60 is subject to N6-(pyridoxal phosphate)lysine. R158 serves as a coordination point for substrate. Y288 (proton acceptor; specific for L-alanine) is an active-site residue. M332 is a substrate binding site.

The protein belongs to the alanine racemase family. Pyridoxal 5'-phosphate is required as a cofactor.

The catalysed reaction is L-alanine = D-alanine. The protein operates within amino-acid biosynthesis; D-alanine biosynthesis; D-alanine from L-alanine: step 1/1. Catalyzes the interconversion of L-alanine and D-alanine. May also act on other amino acids. This Clostridium acetobutylicum (strain ATCC 824 / DSM 792 / JCM 1419 / IAM 19013 / LMG 5710 / NBRC 13948 / NRRL B-527 / VKM B-1787 / 2291 / W) protein is Alanine racemase 2 (alr2).